Here is a 157-residue protein sequence, read N- to C-terminus: Small ribosomal subunit protein uS7 (157 aa).

This sequence belongs to the universal ribosomal protein uS7 family. Part of the 30S ribosomal subunit. Contacts proteins S9 and S11.

In terms of biological role, one of the primary rRNA binding proteins, it binds directly to 16S rRNA where it nucleates assembly of the head domain of the 30S subunit. Is located at the subunit interface close to the decoding center, probably blocks exit of the E-site tRNA. This Caldicellulosiruptor bescii (strain ATCC BAA-1888 / DSM 6725 / KCTC 15123 / Z-1320) (Anaerocellum thermophilum) protein is Small ribosomal subunit protein uS7.